We begin with the raw amino-acid sequence, 94 residues long: UPF0235 protein Dred_0717 (94 aa).

The protein belongs to the UPF0235 family.

In Desulforamulus reducens (strain ATCC BAA-1160 / DSM 100696 / MI-1) (Desulfotomaculum reducens), this protein is UPF0235 protein Dred_0717.